We begin with the raw amino-acid sequence, 1295 residues long: Protein glp-1 (1295 aa).

An N-terminal signal peptide occupies residues 1 to 15; it reads MRVLLILLAFFAPIA. The Extracellular segment spans residues 16–764; the sequence is SQLMGGECGR…NEIDEGWSRS (749 aa). EGF-like domains lie at 19 to 58, 117 to 152, 154 to 190, and 190 to 230; these read MGGE…AFCE, GVNP…SYCE, GIDH…RYCE, and ERTE…EFCN. Cystine bridges form between cysteine 23–cysteine 35, cysteine 29–cysteine 46, cysteine 48–cysteine 57, cysteine 121–cysteine 131, cysteine 126–cysteine 140, cysteine 142–cysteine 151, cysteine 158–cysteine 169, cysteine 163–cysteine 178, cysteine 180–cysteine 189, cysteine 201–cysteine 206, cysteine 220–cysteine 229, cysteine 236–cysteine 248, cysteine 242–cysteine 257, cysteine 259–cysteine 268, cysteine 275–cysteine 286, cysteine 280–cysteine 296, cysteine 298–cysteine 307, cysteine 329–cysteine 342, cysteine 336–cysteine 347, cysteine 349–cysteine 358, cysteine 373–cysteine 384, cysteine 378–cysteine 394, cysteine 396–cysteine 405, cysteine 411–cysteine 422, cysteine 416–cysteine 431, cysteine 433–cysteine 442, cysteine 450–cysteine 461, cysteine 455–cysteine 467, cysteine 469–cysteine 478, cysteine 496–cysteine 519, cysteine 501–cysteine 514, cysteine 510–cysteine 526, cysteine 536–cysteine 560, cysteine 542–cysteine 555, cysteine 551–cysteine 567, cysteine 582–cysteine 595, and cysteine 591–cysteine 607. Residues 232–269 form the EGF-like 5; calcium-binding domain; sequence DKNECLIEETCVNNSTCFNLHGDFTCTCKPGYAGKYCE. Asparagine 244 and asparagine 245 each carry an N-linked (GlcNAc...) asparagine glycan. EGF-like domains are found at residues 271 to 308, 316 to 359, 369 to 406, 407 to 443, and 446 to 479; these read AIDM…QRCE, GGIH…DRCE, DIQS…LNCE, QHLL…DYCE, and DRQL…PTCE. N-linked (GlcNAc...) asparagine glycosylation occurs at asparagine 333. The N-linked (GlcNAc...) asparagine glycan is linked to asparagine 381. LNR repeat units follow at residues 496–532, 536–577, and 581–612; these read CEQR…GQRP, CQYP…CPAH, and HCIE…NGTE. N-linked (GlcNAc...) asparagine glycosylation is found at asparagine 609 and asparagine 675. A helical transmembrane segment spans residues 765 to 786; the sequence is QVILFACIAFLAFGTVVAGVIA. At 787–1295 the chain is on the cytoplasmic side; that stretch reads KNGPERSRKR…AEQMNGSFYC (509 aa). 5 ANK repeats span residues 961–990, 994–1023, 1030–1062, 1074–1103, and 1107–1136; these read DENT…NPTI, SERS…LLKE, NGMT…KLDY, KGRT…NKDK, and DGRT…SLGI. The tract at residues 1177-1244 is disordered; the sequence is IVKSGHGAKS…TTSTPNRMET (68 aa). Residues 1201 to 1210 are compositionally biased toward polar residues; sequence KTPTSAASSR. Low complexity predominate over residues 1221–1239; sequence DGSFSSPSPHYYPTTTSTP.

Interacts with sel-10. In terms of assembly, when activated, the glp-1/Notch intracellular domain (NICD) may become a component of a complex consisting of at least the NICD, lag-1 and lag-3. Upon binding its ligands, it is cleaved (S2 cleavage) in its extracellular domain, close to the transmembrane domain. S2 cleavage is probably mediated by the metalloproteases adm-4 and sup-17. It is then cleaved (S3 cleavage) downstream of its transmembrane domain, releasing it from the cell membrane; S3 cleavage requires a multiprotein gamma-secretase complex, which may include presenilin sel-12. Expressed in the distal mitotic region of the germ line. May be absent from the gonadal distal tip cell (DTC).

It is found in the cell membrane. Its subcellular location is the cell projection. The protein resides in the axon. It localises to the nucleus. In terms of biological role, essential signaling protein which has a major role in germline and embryonic development; involved in cell fate decisions that require cell-cell interactions. Probable membrane-bound receptor for putative ligands lag-2 and apx-1. Upon ligand activation, and releasing from the cell membrane, the glp-1/Notch intracellular domain (NICD) probably forms a transcriptional activator complex with lag-1 and lag-3 and regulates expression of various genes; targets in the germline include lst-1 and sygl-1. Involved in the specification of the cell fates of the blastomeres, ABa and ABp. Proper signaling by glp-1 induces ABa descendants to produce anterior pharyngeal cells, and ABp descendants to adopt a different fate. Contributes to the establishment of the dorsal-ventral axis in early embryos. Required in postmitotic neurons in order to maintain the developmentally arrested larval state known as dauer, probably in response to lag-2. Regulates germ cell mitotic proliferation probably by regulating MAP kinase phosphatase lip-1 expression. Required for oocyte growth control. Plays a negative role in lifespan. In Caenorhabditis elegans, this protein is Protein glp-1.